We begin with the raw amino-acid sequence, 179 residues long: Large ribosomal subunit protein uL6 (179 aa).

Belongs to the universal ribosomal protein uL6 family. As to quaternary structure, part of the 50S ribosomal subunit.

In terms of biological role, this protein binds to the 23S rRNA, and is important in its secondary structure. It is located near the subunit interface in the base of the L7/L12 stalk, and near the tRNA binding site of the peptidyltransferase center. The protein is Large ribosomal subunit protein uL6 of Rhodococcus erythropolis (strain PR4 / NBRC 100887).